Here is a 229-residue protein sequence, read N- to C-terminus: MKKKKALASLPYLVSIIFLPWWVSLSFNKCLETWVINWWNTRQSEIPLNDIQDKNVLEKFMELEELFLLDEMIKEYSETHMQRLHIGMHKETIQLVQRQNESHFHIILHFSTNLICFAILSGYFFLGNKELFIFNSWIQEFLYNLSDTIKAFSILLVTDLWIGFHSTHGWELMIGSIYNDFGLAQNDQIISGLVSTFPVILDTIVKYWIFHFLNRVSPSLVVIYHSMNE.

Transmembrane regions (helical) follow at residues 7-27 (LASL…SLSF), 106-126 (IILH…YFFL), 154-174 (ILLV…ELMI), and 189-209 (IISG…KYWI).

It belongs to the CemA family.

It localises to the plastid. It is found in the chloroplast inner membrane. The catalysed reaction is K(+)(in) + H(+)(out) = K(+)(out) + H(+)(in). In terms of biological role, contributes to K(+)/H(+) antiport activity by supporting proton efflux to control proton extrusion and homeostasis in chloroplasts in a light-dependent manner to modulate photosynthesis. Prevents excessive induction of non-photochemical quenching (NPQ) under continuous-light conditions. Indirectly promotes efficient inorganic carbon uptake into chloroplasts. The protein is Potassium/proton antiporter CemA of Phalaenopsis aphrodite subsp. formosana (Moth orchid).